A 407-amino-acid polypeptide reads, in one-letter code: E3 ubiquitin-protein ligase TRIM13 (407 aa).

The segment at 10–58 (CPICCSLFDDPRVLPCSHNFCKKCLEGILEGNVRNSLWRSSPFKCPTCR) adopts an RING-type zinc-finger fold. The B box-type zinc-finger motif lies at 89–131 (PKMPVCKGHLGQPLNIFCLTDMQLICGICATRGEHTKHVFCSI). Residues cysteine 94, histidine 97, cysteine 117, and histidine 123 each contribute to the Zn(2+) site. Residues 172-200 (LQLLTKDSDKVKEFFEKLQYTLDQKKNEI) adopt a coiled-coil conformation. A helical membrane pass occupies residues 316–336 (PLFVVVILLGLLIFFSPTMFL).

Interacts (via C-terminal domain) with VCP. Interacts with AKT1; the interaction ubiquitinates AKT1 and leads to its proteasomal degradation. Interacts with MDM2; the interaction ubiquitinates AKT1 and leads to its proteasomal degradation. Interacts with p62/SQSTM1. Interacts with TRAF6. Interacts with IKBKG/NEMO. Post-translationally, auto-ubiquitinated; requires the RING-type zinc finger. Auto-polyubiquitination leads to proteasomal degradation.

It localises to the endoplasmic reticulum membrane. It carries out the reaction S-ubiquitinyl-[E2 ubiquitin-conjugating enzyme]-L-cysteine + [acceptor protein]-L-lysine = [E2 ubiquitin-conjugating enzyme]-L-cysteine + N(6)-ubiquitinyl-[acceptor protein]-L-lysine.. It participates in protein modification; protein ubiquitination. Functionally, endoplasmic reticulum (ER) membrane anchored E3 ligase involved in the retrotranslocation and turnover of membrane and secretory proteins from the ER through a set of processes named ER-associated degradation (ERAD). This process acts on misfolded proteins as well as in the regulated degradation of correctly folded proteins. Enhances ionizing radiation-induced p53/TP53 stability and apoptosis via ubiquitinating MDM2 and AKT1 and decreasing AKT1 kinase activity through MDM2 and AKT1 proteasomal degradation. Regulates ER stress-induced autophagy, and may act as a tumor suppressor. Also plays a role in innate immune response by stimulating NF-kappa-B activity in the TLR2 signaling pathway. Ubiquitinates TRAF6 via the 'Lys-29'-linked polyubiquitination chain resulting in NF-kappa-B activation. Participates as well in T-cell receptor-mediated NF-kappa-B activation. In the presence of TNF, modulates the IKK complex by regulating IKBKG/NEMO ubiquitination leading to the repression of NF-kappa-B. This is E3 ubiquitin-protein ligase TRIM13 (TRIM13) from Bos taurus (Bovine).